The primary structure comprises 599 residues: MKNIRNFSIIAHIDHGKSTLSDRIIQICGGLSDREMEAQVLDSMDLERERGITIKAQSVTLDYKASDGETYQLNFIDTPGHVDFSYEVSRSLAACEGALLVVDAGQGVEAQTLANCYTAMEMDLEVVPVLNKIDLPAADPERVADEIEDIVGIDAHDAVRCSAKTGVGVTDVLERLVRDIPPPEGDPDAPLQALIIDSWFDNYLGVVSLVRIKNGTMRKGDKIKVMSTGQVYNADRLGIFTPKQVDRTELKCGEVGWLVCAIKDILGAPVGDTLTAARNPADKALPGFKKVKPQVYAGLFPVSSDDYEAFRDALGKLSLNDASLFYEPESSTALGFGFRCGFLGLLHMEIIQERLEREYDLDLITTAPTVVYEVETTSKEVIYVDSPSKLPPLNNIQELREPIAECHMLLPQEFLGNVITLCVEKRGVQTNMVYHGKQVALTYEIPMAEVVLDFFDRLKSTSRGYASLDYNFKRFQASNMVRVDVLINGERVDALALITHNDNAPYRGRELVEKMKDLIPRQQFDIAIQAAIGNHIIARSTVKQLRKNVLAKCYGGDVSRKKKLLQKQKEGKKRMKQVGNVELPQEAFLAILHVGKDGK.

Residues 2-184 (KNIRNFSIIA…RLVRDIPPPE (183 aa)) enclose the tr-type G domain. Residues 14 to 19 (DHGKST) and 131 to 134 (NKID) each bind GTP.

Belongs to the TRAFAC class translation factor GTPase superfamily. Classic translation factor GTPase family. LepA subfamily.

Its subcellular location is the cell inner membrane. The enzyme catalyses GTP + H2O = GDP + phosphate + H(+). In terms of biological role, required for accurate and efficient protein synthesis under certain stress conditions. May act as a fidelity factor of the translation reaction, by catalyzing a one-codon backward translocation of tRNAs on improperly translocated ribosomes. Back-translocation proceeds from a post-translocation (POST) complex to a pre-translocation (PRE) complex, thus giving elongation factor G a second chance to translocate the tRNAs correctly. Binds to ribosomes in a GTP-dependent manner. This Klebsiella pneumoniae subsp. pneumoniae (strain ATCC 700721 / MGH 78578) protein is Elongation factor 4.